Consider the following 370-residue polypeptide: Histidinol-phosphate aminotransferase 3 (370 aa).

An N6-(pyridoxal phosphate)lysine modification is found at Lys229.

Belongs to the class-II pyridoxal-phosphate-dependent aminotransferase family. Histidinol-phosphate aminotransferase subfamily. As to quaternary structure, homodimer. Pyridoxal 5'-phosphate is required as a cofactor.

It catalyses the reaction L-histidinol phosphate + 2-oxoglutarate = 3-(imidazol-4-yl)-2-oxopropyl phosphate + L-glutamate. Its pathway is amino-acid biosynthesis; L-histidine biosynthesis; L-histidine from 5-phospho-alpha-D-ribose 1-diphosphate: step 7/9. The protein is Histidinol-phosphate aminotransferase 3 (hisC3) of Rhizobium meliloti (strain 1021) (Ensifer meliloti).